A 152-amino-acid polypeptide reads, in one-letter code: MDLELFDDDQLLDDKHHDLIKKLVAFCGKQLKLPENTEMSITLVGDDEIERINREYRETDRVTDVISFAIEEGEDDLPLLPGMAKNIGDLFIDPLTVRRHAEDYGHSFERELGYTVVHGFLHLNGYDHIKPEDEAVMIPLQKKILAAYGLTR.

The Zn(2+) site is built by His118, His122, and His128.

Belongs to the endoribonuclease YbeY family. It depends on Zn(2+) as a cofactor.

The protein localises to the cytoplasm. Functionally, single strand-specific metallo-endoribonuclease involved in late-stage 70S ribosome quality control and in maturation of the 3' terminus of the 16S rRNA. This chain is Endoribonuclease YbeY, found in Lacticaseibacillus paracasei (strain ATCC 334 / BCRC 17002 / CCUG 31169 / CIP 107868 / KCTC 3260 / NRRL B-441) (Lactobacillus paracasei).